The primary structure comprises 343 residues: Protein rax1 (343 aa).

Residues 1-235 (MASAPRVSEV…NLNPLTCTGR (235 aa)) lie on the Cytoplasmic side of the membrane. An RGS domain is found at 109 to 228 (ELSNEQTINS…LNHKFKHNLN (120 aa)). The chain crosses the membrane as a helical span at residues 236 to 256 (FIIGYVSTFAAYWLGFCGIFL). Residues 257–263 (DYSRRKR) are Extracellular-facing. The chain crosses the membrane as a helical span at residues 264-284 (VWTLLPFAFGFYNLICTWSKH). Topologically, residues 285–317 (DPVLALLGYSEVKPFHYEKVLQPSIRLSLNRRA) are cytoplasmic. The helical transmembrane segment at 318 to 338 (IFVLSIIVLIVGANTAIFSCV) threads the bilayer. The Extracellular portion of the chain corresponds to 339–343 (PSIRL).

The protein localises to the cell membrane. It is found in the endoplasmic reticulum membrane. In terms of biological role, may be involved in cell polarization and division. This is Protein rax1 (rax1) from Schizosaccharomyces pombe (strain 972 / ATCC 24843) (Fission yeast).